Reading from the N-terminus, the 103-residue chain is Small ribosomal subunit protein uS10 (103 aa).

It belongs to the universal ribosomal protein uS10 family. In terms of assembly, part of the 30S ribosomal subunit.

Its function is as follows. Involved in the binding of tRNA to the ribosomes. In Jannaschia sp. (strain CCS1), this protein is Small ribosomal subunit protein uS10.